The chain runs to 338 residues: Glycerol-3-phosphate dehydrogenase [NAD(P)+] (338 aa).

NADPH contacts are provided by S13, W14, and K108. Residues K108, G139, and S141 each contribute to the sn-glycerol 3-phosphate site. A143 is an NADPH binding site. K194, D247, S257, R258, and N259 together coordinate sn-glycerol 3-phosphate. K194 (proton acceptor) is an active-site residue. R258 contributes to the NADPH binding site. Positions 282 and 284 each coordinate NADPH.

Belongs to the NAD-dependent glycerol-3-phosphate dehydrogenase family.

The protein resides in the cytoplasm. The catalysed reaction is sn-glycerol 3-phosphate + NAD(+) = dihydroxyacetone phosphate + NADH + H(+). The enzyme catalyses sn-glycerol 3-phosphate + NADP(+) = dihydroxyacetone phosphate + NADPH + H(+). It functions in the pathway membrane lipid metabolism; glycerophospholipid metabolism. In terms of biological role, catalyzes the reduction of the glycolytic intermediate dihydroxyacetone phosphate (DHAP) to sn-glycerol 3-phosphate (G3P), the key precursor for phospholipid synthesis. This chain is Glycerol-3-phosphate dehydrogenase [NAD(P)+], found in Streptococcus uberis (strain ATCC BAA-854 / 0140J).